A 515-amino-acid polypeptide reads, in one-letter code: Alpha-1B adrenergic receptor (515 aa).

Residues 1 to 45 (MNPDLDTGHNTSAPAQWGELKDANFTGPNQTSSNSTLPQLDVTRA) are Extracellular-facing. Residues Asn-10, Asn-24, and Asn-34 are each glycosylated (N-linked (GlcNAc...) asparagine). The helical transmembrane segment at 46–70 (ISVGLVLGAFILFAIVGNILVILSV) threads the bilayer. Topologically, residues 71-83 (ACNRHLRTPTNYF) are cytoplasmic. Residues 84–105 (IVNLAIADLLLSFTVLPFSATL) form a helical membrane-spanning segment. Residues 106–115 (EVLGYWVLGR) are Extracellular-facing. The chain crosses the membrane as a helical span at residues 116–141 (IFCDIWAAVDVLCCTASILSLCAISI). Cys-118 and Cys-195 form a disulfide bridge. The Cytoplasmic segment spans residues 142 to 161 (DRYIGVRYSLQYPTLVTRRK). The chain crosses the membrane as a helical span at residues 162–184 (AILALLSVWVLSTVISIGPLLGW). At 185–201 (KEPAPNDDKECGVTEEP) the chain is on the extracellular side. Residues 202–224 (FYALFSSLGSFYIPLAVILVMYC) traverse the membrane as a helical segment. Topologically, residues 225–295 (RVYIVAKRTT…FSREKKAAKT (71 aa)) are cytoplasmic. The residue at position 264 (Thr-264) is a Phosphothreonine. The chain crosses the membrane as a helical span at residues 296 to 319 (LGIVVGMFILCWLPFFIALPLGSL). Residues 320 to 326 (FSTLKPP) are Extracellular-facing. Residues 327 to 351 (DAVFKVVFWLGYFNSCLNPIIYPCS) form a helical membrane-spanning segment. Residues 352–515 (SKEFKRAFMR…SNMPLAPGHF (164 aa)) are Cytoplasmic-facing. Cys-365 carries S-palmitoyl cysteine lipidation. The Nuclear localization signal motif lies at 368–378 (RSGRRRRRRRR). Disordered regions lie at residues 392–428 (GGSLERSQSRKDSLDDSGSCMSGSQRTLPSASPSPGY) and 473–515 (LLGE…PGHF). The span at 410 to 424 (SCMSGSQRTLPSASP) shows a compositional bias: polar residues.

The protein belongs to the G-protein coupled receptor 1 family. Adrenergic receptor subfamily. ADRA1B sub-subfamily. Homo- and heterooligomer. Heterooligomerizes with ADRA1B homooligomers in cardiac myocytes. Interacts with CAVIN4.

The protein localises to the nucleus membrane. Its subcellular location is the cell membrane. It localises to the cytoplasm. It is found in the membrane. The protein resides in the caveola. Its function is as follows. This alpha-adrenergic receptor mediates its action by association with G proteins that activate a phosphatidylinositol-calcium second messenger system. Its effect is mediated by G(q) and G(11) proteins. Nuclear ADRA1A-ADRA1B heterooligomers regulate phenylephrine (PE)-stimulated ERK signaling in cardiac myocytes. This Mesocricetus auratus (Golden hamster) protein is Alpha-1B adrenergic receptor (ADRA1B).